Here is a 118-residue protein sequence, read N- to C-terminus: Phosphoribosyl-AMP cyclohydrolase (118 aa).

Mg(2+) is bound at residue aspartate 87. Cysteine 88 contributes to the Zn(2+) binding site. Mg(2+) is bound by residues aspartate 89 and aspartate 91. The Zn(2+) site is built by cysteine 104 and cysteine 111.

It belongs to the PRA-CH family. As to quaternary structure, homodimer. The cofactor is Mg(2+). It depends on Zn(2+) as a cofactor.

The protein localises to the cytoplasm. The catalysed reaction is 1-(5-phospho-beta-D-ribosyl)-5'-AMP + H2O = 1-(5-phospho-beta-D-ribosyl)-5-[(5-phospho-beta-D-ribosylamino)methylideneamino]imidazole-4-carboxamide. Its pathway is amino-acid biosynthesis; L-histidine biosynthesis; L-histidine from 5-phospho-alpha-D-ribose 1-diphosphate: step 3/9. Catalyzes the hydrolysis of the adenine ring of phosphoribosyl-AMP. This is Phosphoribosyl-AMP cyclohydrolase from Corynebacterium glutamicum (strain ATCC 13032 / DSM 20300 / JCM 1318 / BCRC 11384 / CCUG 27702 / LMG 3730 / NBRC 12168 / NCIMB 10025 / NRRL B-2784 / 534).